The sequence spans 491 residues: FAD-dependent monooxygenase idtM (491 aa).

FAD-binding residues include Glu-34, Gly-48, Arg-107, Asp-307, and Ala-320. Residues 448–468 form a helical membrane-spanning segment; that stretch reads ILSLVYVVAGLAMMYMSIYLV.

The protein belongs to the paxM FAD-dependent monooxygenase family. FAD is required as a cofactor.

Its subcellular location is the membrane. It functions in the pathway secondary metabolite biosynthesis. FAD-dependent monooxygenase; part of the gene cluster that mediates the biosynthesis of paspalitrems, indole-diterpene (IDT) mycotoxins that are potent tremorgens in mammals. The geranylgeranyl diphosphate (GGPP) synthase idtG is proposed to catalyze the first step in IDT biosynthesis via catalysis of a series of iterative condensations of isopentenyl diphosphate (IPP) with dimethylallyl diphosphate (DMAPP), geranyl diphosphate (GPP), and farnesyl diphosphate (FPP), to form GGPP. Condensation of indole-3-glycerol phosphate with GGPP by the prenyltransferase idtC then forms 3-geranylgeranylindole (3-GGI). Epoxidation of the two terminal alkenes of the geranylgeranyl moiety by the FAD-dependent monooxygenase idtM, and cyclization by the terpene cyclase idtB then leads to the production of paspaline. The cytochrome P450 monooxygenase idtP then catalyzes oxidative elimination of the pendant methyl group at C-12 of paspaline and generates the C-10 ketone to yield 13-desoxypaxilline. The cytochrome P450 monooxygenase idtQ may catalyze the C-13 oxidation of 13-desoxypaxilline to afford paxilline. Considering that both paspalicine and paxilline were detected in C.paspali, idtQ also catalyzes the formation of paspalinine from 13-desoxypaxilline via paspalicine as an intermediate. Finally, the alpha-prenyltransferase idtF prenylates paspalinine at the C-20 or the C-21 positions to yield paspalitrems A and C, respectively. The hydroxylation of paspalitrem A at C-32 by a still unknown oxidase affords paspalitrem B. This chain is FAD-dependent monooxygenase idtM, found in Claviceps paspali (Rye ergot fungus).